Reading from the N-terminus, the 132-residue chain is Small ribosomal subunit protein uS8 (132 aa).

It belongs to the universal ribosomal protein uS8 family. Part of the 30S ribosomal subunit. Contacts proteins S5 and S12.

One of the primary rRNA binding proteins, it binds directly to 16S rRNA central domain where it helps coordinate assembly of the platform of the 30S subunit. This Syntrophotalea carbinolica (strain DSM 2380 / NBRC 103641 / GraBd1) (Pelobacter carbinolicus) protein is Small ribosomal subunit protein uS8.